The following is a 611-amino-acid chain: Putative clathrin assembly protein At4g02650 (611 aa).

The ENTH domain occupies 26–162 (GRSSSLTELE…DYRMQGRRGK (137 aa)). 2 disordered regions span residues 158–184 (GRRGKKKSGGGGGGDGDSGEEDDHRGT) and 337–406 (TTKS…GDLL). Residues 386–401 (METKKDVEEVVSRQDQ) are compositionally biased toward basic and acidic residues.

The protein resides in the membrane. Its subcellular location is the clathrin-coated pit. The protein localises to the golgi apparatus. It localises to the cytoplasmic vesicle. It is found in the clathrin-coated vesicle. This Arabidopsis thaliana (Mouse-ear cress) protein is Putative clathrin assembly protein At4g02650.